The sequence spans 396 residues: Pectinesterase (396 aa).

An N-terminal signal peptide occupies residues 1 to 26 (MQSTTLYLKTAAFLGGCSLFAATALA). Thr-174 contacts substrate. Residue Asp-232 is the Proton donor of the active site. Catalysis depends on Asp-259, which acts as the Nucleophile. Substrate contacts are provided by Arg-324 and Trp-326.

It belongs to the pectinesterase family.

It localises to the secreted. The enzyme catalyses [(1-&gt;4)-alpha-D-galacturonosyl methyl ester](n) + n H2O = [(1-&gt;4)-alpha-D-galacturonosyl](n) + n methanol + n H(+). It participates in glycan metabolism; pectin degradation; 2-dehydro-3-deoxy-D-gluconate from pectin: step 1/5. Involved in maceration and soft-rotting of plant tissue. The sequence is that of Pectinesterase (pme) from Ralstonia solanacearum (Pseudomonas solanacearum).